We begin with the raw amino-acid sequence, 246 residues long: Large ribosomal subunit protein uL3 (246 aa).

Gln-151 carries the N5-methylglutamine modification.

The protein belongs to the universal ribosomal protein uL3 family. In terms of assembly, part of the 50S ribosomal subunit. Forms a cluster with proteins L14 and L19. Methylated by PrmB.

In terms of biological role, one of the primary rRNA binding proteins, it binds directly near the 3'-end of the 23S rRNA, where it nucleates assembly of the 50S subunit. The chain is Large ribosomal subunit protein uL3 from Bartonella henselae (strain ATCC 49882 / DSM 28221 / CCUG 30454 / Houston 1) (Rochalimaea henselae).